The sequence spans 500 residues: Probable lipoprotein aminopeptidase LpqL (500 aa).

Residues 1 to 24 (MVNKSRMMPAVLAVAVVVAFLTTG) form the signal peptide. C25 carries the N-palmitoyl cysteine lipid modification. C25 carries the S-diacylglycerol cysteine lipid modification. In terms of domain architecture, PA spans 140–231 (VTGPLVAAPA…VTKSVGFQLR (92 aa)). H271 and D283 together coordinate Zn(2+). The active-site Proton acceptor is E316. Zn(2+)-binding residues include E317, D345, and H448.

This sequence belongs to the peptidase M28 family. M28A subfamily. It depends on Zn(2+) as a cofactor. In terms of processing, modified by Lgt on Cys-25 with an S-linked diacylglycerol with a mixture of C16 and C19 fatty acids (palmitic and tuberculostearic acid), signal peptide is removed by LspA, modified by Lnt with an amide-linked mixture of C16 and C19 fatty acids, expressed in M.bovis.

It localises to the cell membrane. The catalysed reaction is Release of an N-terminal amino acid, Xaa-|-Yaa-, in which Xaa is preferably Leu, but may be other amino acids including Pro although not Arg or Lys, and Yaa may be Pro. Amino acid amides and methyl esters are also readily hydrolyzed, but rates on arylamides are exceedingly low.. Its function is as follows. An aminopeptidase; acts on free N-terminal amino groups with a very strong preference for Leu in the first position. This is Probable lipoprotein aminopeptidase LpqL (lpqL) from Mycobacterium tuberculosis (strain ATCC 25618 / H37Rv).